The following is a 410-amino-acid chain: Phosphoglycerate kinase (410 aa).

Residues 24 to 26 (DLN), Arg40, 63 to 66 (HLGR), Arg122, and Arg162 each bind substrate. Residues Lys212, Gly300, Glu331, and 360 to 363 (GGDS) each bind ATP.

Belongs to the phosphoglycerate kinase family. Monomer.

The protein resides in the cytoplasm. The enzyme catalyses (2R)-3-phosphoglycerate + ATP = (2R)-3-phospho-glyceroyl phosphate + ADP. The protein operates within carbohydrate degradation; glycolysis; pyruvate from D-glyceraldehyde 3-phosphate: step 2/5. The sequence is that of Phosphoglycerate kinase from Nocardia farcinica (strain IFM 10152).